A 119-amino-acid polypeptide reads, in one-letter code: NADH-quinone oxidoreductase subunit A (119 aa).

The next 3 membrane-spanning stretches (helical) occupy residues 7 to 27, 63 to 83, and 88 to 108; these read FPVL…MTIG, LIAI…PWGV, and IGWP…VGFV.

The protein belongs to the complex I subunit 3 family. In terms of assembly, NDH-1 is composed of 14 different subunits. Subunits NuoA, H, J, K, L, M, N constitute the membrane sector of the complex.

Its subcellular location is the cell inner membrane. It carries out the reaction a quinone + NADH + 5 H(+)(in) = a quinol + NAD(+) + 4 H(+)(out). Its function is as follows. NDH-1 shuttles electrons from NADH, via FMN and iron-sulfur (Fe-S) centers, to quinones in the respiratory chain. The immediate electron acceptor for the enzyme in this species is believed to be ubiquinone. Couples the redox reaction to proton translocation (for every two electrons transferred, four hydrogen ions are translocated across the cytoplasmic membrane), and thus conserves the redox energy in a proton gradient. The protein is NADH-quinone oxidoreductase subunit A of Ralstonia nicotianae (strain ATCC BAA-1114 / GMI1000) (Ralstonia solanacearum).